Consider the following 398-residue polypeptide: MGAKSMRSWCLCQICSCGSDYCPYEIVKQPRHVPEEYKPKQGKIDLGTTYKRDLNSYKVQPVAIVRPLERQVKKGKLDTVPTYKDDYRAWDLHKSELYKPEQTYHPPTVKFGNSTTFQDDFVPQEIKPRQSFKPSSVVKRSTAPFNGITSHRLDYIPHQLELKFERPKEVYKPTDQRFEDLTTHRCDFQGLIGETAKLCRPVHTRVTQNALFEGSTEFRESFQPWEIPPPEVKKVPEYVPPTGSMLLNSTSHLDYVPYQANHVVPIRPVSQKRSNNFPFQGKSIMKEDFPAWESCRQGLIKKQQQIPNPSGKFDGLSTFRSHYVPHELIPTESCKPLNIAFKSSVPFDDVTMYSVEYTPKRQEICPASYPSPPGYIFDNTNSQGHKFFRKIIPAVKAF.

6 mn regions span residues 114–126, 148–162, 248–260, 282–296, 316–328, and 350–364; these read STTF…PQEI, ITSH…QLEL, NSTS…PYQA, KSIM…ESCR, LSTF…PHEL, and VTMY…RQEI.

It belongs to the FAM154 family.

The polypeptide is Stabilizer of axonemal microtubules 2 (SAXO2) (Homo sapiens (Human)).